A 145-amino-acid polypeptide reads, in one-letter code: 3-hydroxyacyl-[acyl-carrier-protein] dehydratase FabZ (145 aa).

His-52 is an active-site residue.

This sequence belongs to the thioester dehydratase family. FabZ subfamily.

It localises to the cytoplasm. The catalysed reaction is a (3R)-hydroxyacyl-[ACP] = a (2E)-enoyl-[ACP] + H2O. Involved in unsaturated fatty acids biosynthesis. Catalyzes the dehydration of short chain beta-hydroxyacyl-ACPs and long chain saturated and unsaturated beta-hydroxyacyl-ACPs. The chain is 3-hydroxyacyl-[acyl-carrier-protein] dehydratase FabZ from Deinococcus radiodurans (strain ATCC 13939 / DSM 20539 / JCM 16871 / CCUG 27074 / LMG 4051 / NBRC 15346 / NCIMB 9279 / VKM B-1422 / R1).